Here is a 69-residue protein sequence, read N- to C-terminus: Bowman-Birk type proteinase inhibitor A2 (69 aa).

4 disulfides stabilise this stretch: cysteine 12-cysteine 31, cysteine 18-cysteine 29, cysteine 38-cysteine 45, and cysteine 42-cysteine 59.

It belongs to the Bowman-Birk serine protease inhibitor family. In terms of tissue distribution, expressed in bulb (at protein level).

In terms of biological role, serine protease inhibitor. This chain is Bowman-Birk type proteinase inhibitor A2, found in Hyacinthus orientalis (Common hyacinth).